Here is a 159-residue protein sequence, read N- to C-terminus: 2-C-methyl-D-erythritol 2,4-cyclodiphosphate synthase (159 aa).

The a divalent metal cation site is built by Asp-8 and His-10. 4-CDP-2-C-methyl-D-erythritol 2-phosphate contacts are provided by residues 8 to 10 (DVH) and 34 to 35 (HS). His-42 serves as a coordination point for a divalent metal cation. 4-CDP-2-C-methyl-D-erythritol 2-phosphate is bound by residues 56–58 (DIG), 61–65 (FPDTD), 100–106 (AQAPRML), 132–135 (TTTE), Phe-139, and Arg-142.

Belongs to the IspF family. In terms of assembly, homotrimer. A divalent metal cation serves as cofactor.

The catalysed reaction is 4-CDP-2-C-methyl-D-erythritol 2-phosphate = 2-C-methyl-D-erythritol 2,4-cyclic diphosphate + CMP. Its pathway is isoprenoid biosynthesis; isopentenyl diphosphate biosynthesis via DXP pathway; isopentenyl diphosphate from 1-deoxy-D-xylulose 5-phosphate: step 4/6. Functionally, involved in the biosynthesis of isopentenyl diphosphate (IPP) and dimethylallyl diphosphate (DMAPP), two major building blocks of isoprenoid compounds. Catalyzes the conversion of 4-diphosphocytidyl-2-C-methyl-D-erythritol 2-phosphate (CDP-ME2P) to 2-C-methyl-D-erythritol 2,4-cyclodiphosphate (ME-CPP) with a corresponding release of cytidine 5-monophosphate (CMP). The sequence is that of 2-C-methyl-D-erythritol 2,4-cyclodiphosphate synthase from Escherichia coli O45:K1 (strain S88 / ExPEC).